Consider the following 366-residue polypeptide: Adenosine deaminase (366 aa).

Residues His19 and His21 each coordinate Zn(2+). Substrate is bound by residues His21, Asp23, and Gly181. His208 contributes to the Zn(2+) binding site. The Proton donor role is filled by Glu211. Position 304 (Asp304) interacts with Zn(2+).

The protein belongs to the metallo-dependent hydrolases superfamily. Adenosine and AMP deaminases family. Adenosine deaminase subfamily. The cofactor is Zn(2+).

The enzyme catalyses adenosine + H2O + H(+) = inosine + NH4(+). It carries out the reaction 2'-deoxyadenosine + H2O + H(+) = 2'-deoxyinosine + NH4(+). Functionally, catalyzes the hydrolytic deamination of adenosine and 2-deoxyadenosine. The chain is Adenosine deaminase from Mycobacterium avium (strain 104).